The following is a 184-amino-acid chain: Oligoribonuclease (184 aa).

Positions Leu-8 to Leu-171 constitute an Exonuclease domain. The active site involves Tyr-129.

It belongs to the oligoribonuclease family.

Its subcellular location is the cytoplasm. Functionally, 3'-to-5' exoribonuclease specific for small oligoribonucleotides. In Buchnera aphidicola subsp. Acyrthosiphon pisum (strain APS) (Acyrthosiphon pisum symbiotic bacterium), this protein is Oligoribonuclease.